We begin with the raw amino-acid sequence, 950 residues long: Serine/threonine-protein phosphatase 4 regulatory subunit 1 (950 aa).

9 HEAT repeats span residues 1–25 (MADL…DYSS), 26–63 (ESDV…IFNR), 65–81 (MVAR…CDDE), 82–119 (RDCI…FCQE), 127–164 (AFSK…QELI), 168–206 (DVET…MVGK), 208–246 (ITER…VVGQ), 248–285 (ATEE…ATCQ), and 287–324 (IRRT…TFAN). 3 disordered regions span residues 326–374 (SSSG…SVSN), 413–438 (ESHQ…RPEV), and 473–499 (EQNS…SPNI). The span at 332-365 (FKEESKSSEEMSVENKNRTRDQEAPEDVQVRPED) shows a compositional bias: basic and acidic residues. HEAT repeat units follow at residues 505–542 (KELE…LDAH), 568–606 (INQE…FSPD), 698–734 (LTAA…LLHI), 799–837 (WISY…RCPK), and 861–898 (QFAV…EKDY). A Phosphoserine modification is found at serine 935.

In terms of assembly, serine/threonine-protein phosphatase 4 (PP4) occurs in different assemblies of the catalytic and one or more regulatory subunits. Component of the PP4 complex PPP4C-PPP4R1. Interacts with HDAC3. (Microbial infection) Interacts with merkel polyomavirus small tumor antigen; this interaction bridges small tumor antigen with NEMO to inhibit NF-kappa-B. Widely expressed with high expression in cultured mesangial cells. Isoform 1 and isoform 2 are expressed in renal tissues.

In terms of biological role, regulatory subunit of serine/threonine-protein phosphatase 4. May play a role in regulation of cell division in renal glomeruli. The PPP4C-PPP4R1 PP4 complex may play a role in dephosphorylation and regulation of HDAC3. Plays a role in the inhibition of TNF-induced NF-kappa-B activation by regulating the dephosphorylation of TRAF2. (Microbial infection) Participates in merkel polyomavirus-mediated inhibition of NF-kappa-B by bridging viral small tumor antigen with NEMO. The chain is Serine/threonine-protein phosphatase 4 regulatory subunit 1 (PPP4R1) from Homo sapiens (Human).